The chain runs to 809 residues: Lon protease (809 aa).

The 201-residue stretch at 42–242 (LVIYPLGGRP…KVLTLLKKEL (201 aa)) folds into the Lon N-terminal domain. 395–402 (GPPGVGKT) contacts ATP. The 181-residue stretch at 629 to 809 (LTGVGIVTGL…YAEVAKLVFG (181 aa)) folds into the Lon proteolytic domain. Active-site residues include serine 716 and lysine 759.

The protein belongs to the peptidase S16 family. As to quaternary structure, homohexamer. Organized in a ring with a central cavity.

Its subcellular location is the cytoplasm. The enzyme catalyses Hydrolysis of proteins in presence of ATP.. Functionally, ATP-dependent serine protease that mediates the selective degradation of mutant and abnormal proteins as well as certain short-lived regulatory proteins. Required for cellular homeostasis and for survival from DNA damage and developmental changes induced by stress. Degrades polypeptides processively to yield small peptide fragments that are 5 to 10 amino acids long. Binds to DNA in a double-stranded, site-specific manner. The polypeptide is Lon protease (Magnetococcus marinus (strain ATCC BAA-1437 / JCM 17883 / MC-1)).